The sequence spans 241 residues: Ribosome-recycling factor, mitochondrial (241 aa).

The protein belongs to the RRF family.

The protein resides in the mitochondrion. In terms of biological role, necessary for protein synthesis in mitochondria. Functions as a ribosome recycling factor in mitochondria. This Kluyveromyces lactis (strain ATCC 8585 / CBS 2359 / DSM 70799 / NBRC 1267 / NRRL Y-1140 / WM37) (Yeast) protein is Ribosome-recycling factor, mitochondrial (RRF1).